The primary structure comprises 126 residues: Holo-[acyl-carrier-protein] synthase (126 aa).

Residues Asp-9 and Glu-57 each coordinate Mg(2+).

It belongs to the P-Pant transferase superfamily. AcpS family. Mg(2+) is required as a cofactor.

Its subcellular location is the cytoplasm. It catalyses the reaction apo-[ACP] + CoA = holo-[ACP] + adenosine 3',5'-bisphosphate + H(+). Transfers the 4'-phosphopantetheine moiety from coenzyme A to a Ser of acyl-carrier-protein. This chain is Holo-[acyl-carrier-protein] synthase, found in Idiomarina loihiensis (strain ATCC BAA-735 / DSM 15497 / L2-TR).